We begin with the raw amino-acid sequence, 353 residues long: Membrane lipoprotein TmpC (353 aa).

The first 20 residues, 1–20 (MREKWVRAFAGVFCAMLLIG), serve as a signal peptide directing secretion. A lipid anchor (N-palmitoyl cysteine) is attached at Cys21. Cys21 carries the S-diacylglycerol cysteine lipid modification. Asp47 is a binding site for guanosine. Residue Asp47 coordinates inosine. Adenosine contacts are provided by residues 47-48 (DS) and Phe56. The guanosine site is built by Asn57, Asp128, Phe206, Gly232, Asp258, and Lys280. Asn57 and Asp128 together coordinate inosine. Adenosine is bound by residues Asp128, Phe206, Gly232, Asp258, and Lys280. Gly232, Asp258, and Lys280 together coordinate inosine.

This sequence belongs to the BMP lipoprotein family. As to quaternary structure, monomer.

The protein resides in the cell membrane. Its function is as follows. Binds purine nucleosides and may play a role in purine nucleoside uptake. May be part of an ABC-type nucleoside uptake system. Has highest affinity for guanosine, followed by inosine and adenosine. Has very low affinity for cytidine and does not bind thymidine. The chain is Membrane lipoprotein TmpC (tmpC) from Treponema pallidum (strain Nichols).